The primary structure comprises 319 residues: Acetyl-coenzyme A carboxylase carboxyl transferase subunit alpha (319 aa).

Residues 35 to 296 (NIDEEVHRLR…KAQLLADLAD (262 aa)) form the CoA carboxyltransferase C-terminal domain.

It belongs to the AccA family. As to quaternary structure, acetyl-CoA carboxylase is a heterohexamer composed of biotin carboxyl carrier protein (AccB), biotin carboxylase (AccC) and two subunits each of ACCase subunit alpha (AccA) and ACCase subunit beta (AccD).

Its subcellular location is the cytoplasm. It catalyses the reaction N(6)-carboxybiotinyl-L-lysyl-[protein] + acetyl-CoA = N(6)-biotinyl-L-lysyl-[protein] + malonyl-CoA. It functions in the pathway lipid metabolism; malonyl-CoA biosynthesis; malonyl-CoA from acetyl-CoA: step 1/1. In terms of biological role, component of the acetyl coenzyme A carboxylase (ACC) complex. First, biotin carboxylase catalyzes the carboxylation of biotin on its carrier protein (BCCP) and then the CO(2) group is transferred by the carboxyltransferase to acetyl-CoA to form malonyl-CoA. The protein is Acetyl-coenzyme A carboxylase carboxyl transferase subunit alpha of Klebsiella pneumoniae subsp. pneumoniae (strain ATCC 700721 / MGH 78578).